Consider the following 143-residue polypeptide: UPF0201 protein Tneu_0685 (143 aa).

Belongs to the UPF0201 family.

The polypeptide is UPF0201 protein Tneu_0685 (Pyrobaculum neutrophilum (strain DSM 2338 / JCM 9278 / NBRC 100436 / V24Sta) (Thermoproteus neutrophilus)).